The chain runs to 1136 residues: Unconventional myosin-Ib (1136 aa).

A Myosin motor domain is found at 15-701; the sequence is IGVGDTVLLE…TLFQLEDLRK (687 aa). Ser60 is modified (phosphoserine). 108 to 115 is an ATP binding site; sequence GESGAGKT. Lys287 is covalently cross-linked (Glycyl lysine isopeptide (Lys-Gly) (interchain with G-Cter in SUMO1); alternate). Residue Lys287 forms a Glycyl lysine isopeptide (Lys-Gly) (interchain with G-Cter in SUMO2); alternate linkage. Positions 592 to 599 are actin-binding; that stretch reads YIRCIKPN. IQ domains follow at residues 704–729, 730–750, 750–778, 780–807, 808–837, and 837–866; these read LEDL…LMKR, SQVV…YQQI, IKSS…HQKR, KEAA…DEAR, NKHA…EARR, and RKHA…ANAG. One can recognise a TH1 domain in the interval 952–1136; the sequence is KALYPSSVGQ…NNRLLEVAVP (185 aa).

The protein belongs to the TRAFAC class myosin-kinesin ATPase superfamily. Myosin family.

Motor protein that may participate in process critical to neuronal development and function such as cell migration, neurite outgrowth and vesicular transport. The protein is Unconventional myosin-Ib (Myo1b) of Rattus norvegicus (Rat).